A 296-amino-acid polypeptide reads, in one-letter code: Mycothiol acetyltransferase (296 aa).

2 consecutive N-acetyltransferase domains span residues Arg8–Glu146 and Ile151–Val296. 1D-myo-inositol 2-(L-cysteinylamino)-2-deoxy-alpha-D-glucopyranoside is bound at residue Glu39. Residue Val76–Thr78 coordinates acetyl-CoA. 3 residues coordinate 1D-myo-inositol 2-(L-cysteinylamino)-2-deoxy-alpha-D-glucopyranoside: Glu178, Lys220, and Glu228. Residues Val232 to Val234 and Gln239 to Arg245 each bind acetyl-CoA. Tyr266 is a 1D-myo-inositol 2-(L-cysteinylamino)-2-deoxy-alpha-D-glucopyranoside binding site.

The protein belongs to the acetyltransferase family. MshD subfamily. Monomer.

It carries out the reaction 1D-myo-inositol 2-(L-cysteinylamino)-2-deoxy-alpha-D-glucopyranoside + acetyl-CoA = mycothiol + CoA + H(+). Functionally, catalyzes the transfer of acetyl from acetyl-CoA to desacetylmycothiol (Cys-GlcN-Ins) to form mycothiol. This chain is Mycothiol acetyltransferase, found in Kytococcus sedentarius (strain ATCC 14392 / DSM 20547 / JCM 11482 / CCUG 33030 / NBRC 15357 / NCTC 11040 / CCM 314 / 541) (Micrococcus sedentarius).